The chain runs to 175 residues: NADH-quinone oxidoreductase subunit I (175 aa).

4Fe-4S ferredoxin-type domains lie at 44-74 (LNRYADGLEKCIGCELCAWACPADAIFVEGA) and 90-119 (RVYQINYLRCIGCGLCIEACPTRALTMTND). Cys54, Cys57, Cys60, Cys64, Cys99, Cys102, Cys105, and Cys109 together coordinate [4Fe-4S] cluster. The interval 148–175 (PPHAMAPGATDEDYYRGTVSPSAEADAR) is disordered.

This sequence belongs to the complex I 23 kDa subunit family. As to quaternary structure, NDH-1 is composed of 14 different subunits. Subunits NuoA, H, J, K, L, M, N constitute the membrane sector of the complex. The cofactor is [4Fe-4S] cluster.

The protein localises to the cell membrane. It carries out the reaction a quinone + NADH + 5 H(+)(in) = a quinol + NAD(+) + 4 H(+)(out). Its function is as follows. NDH-1 shuttles electrons from NADH, via FMN and iron-sulfur (Fe-S) centers, to quinones in the respiratory chain. The immediate electron acceptor for the enzyme in this species is believed to be menaquinone. Couples the redox reaction to proton translocation (for every two electrons transferred, four hydrogen ions are translocated across the cytoplasmic membrane), and thus conserves the redox energy in a proton gradient. The polypeptide is NADH-quinone oxidoreductase subunit I (Mycolicibacterium gilvum (strain PYR-GCK) (Mycobacterium gilvum (strain PYR-GCK))).